The primary structure comprises 172 residues: Stellate protein CG33238 (172 aa).

This sequence belongs to the casein kinase 2 subunit beta family. As to quaternary structure, interacts in vitro with the casein kinase 2 alpha subunit (CkII-alpha). The relevance of such interaction is however unclear in vivo. In terms of tissue distribution, probably not expressed in wild-type flies. In males lacking the Y chromosome, it is testis-specific and constitutes the main component of star-shaped crystals.

Functionally, unknown. In males lacking the Y chromosome, its strong overexpression leads to the appearance of proteinaceous star-shaped crystals in the primary spermatocytes causing meiotic drive, possibly by interfering with normal casein kinase 2 activity. This Drosophila melanogaster (Fruit fly) protein is Stellate protein CG33238 (Ste:CG33238).